The primary structure comprises 1072 residues: Isoleucine--tRNA ligase, cytoplasmic (1072 aa).

Positions 47-57 match the 'HIGH' region motif; it reads PFATGTPHYGH. Residue Lys-486 forms a Glycyl lysine isopeptide (Lys-Gly) (interchain with G-Cter in ubiquitin) linkage. The 'KMSKS' region signature appears at 602 to 606; that stretch reads KMSKS. Lys-605 lines the ATP pocket. Phosphoserine is present on residues Ser-829 and Ser-1059.

The protein belongs to the class-I aminoacyl-tRNA synthetase family.

The protein localises to the cytoplasm. It carries out the reaction tRNA(Ile) + L-isoleucine + ATP = L-isoleucyl-tRNA(Ile) + AMP + diphosphate. The polypeptide is Isoleucine--tRNA ligase, cytoplasmic (ILS1) (Saccharomyces cerevisiae (strain ATCC 204508 / S288c) (Baker's yeast)).